The sequence spans 460 residues: Cysteine--tRNA ligase (460 aa).

Residue Cys29 participates in Zn(2+) binding. Residues 31–41 (PTVYDFAHIGN) carry the 'HIGH' region motif. The Zn(2+) site is built by Cys227, His252, and Glu256. Positions 285–289 (KMSKS) match the 'KMSKS' region motif. An ATP-binding site is contributed by Lys288.

This sequence belongs to the class-I aminoacyl-tRNA synthetase family. As to quaternary structure, monomer. It depends on Zn(2+) as a cofactor.

The protein resides in the cytoplasm. It carries out the reaction tRNA(Cys) + L-cysteine + ATP = L-cysteinyl-tRNA(Cys) + AMP + diphosphate. The polypeptide is Cysteine--tRNA ligase (Bradyrhizobium diazoefficiens (strain JCM 10833 / BCRC 13528 / IAM 13628 / NBRC 14792 / USDA 110)).